Here is a 205-residue protein sequence, read N- to C-terminus: Heme ligase (205 aa).

Residues 48 to 203 form the FAS1 domain; sequence KRTIINLIYS…GVVHIVDKPI (156 aa). A required for binding to host hemoglobin region spans residues 154-172; that stretch reads LRNLLNNDLIVKIEGEFKH. 2 heme binding domain regions span residues 171–181 and 191–200; these read KHCNHSIYLNG and CHNGVVHIVD.

Component of the hemozoin formation complex (HFC) composed of falcipains FP2A and/or FP2B, plasmepsins PMII, PMIII/HAP and PMIV, heme detoxifying protein HDP and falcilysin FLN. The HFC complex is involved in hemoglobin degradation and detoxification of heme in the food vacuole during the asexual blood stage. Interacts with falcipain 2; the interaction is direct and enhances HDP catalytic activity. Interacts with host hemoglobin.

It localises to the vacuole. It is found in the host cytoplasm. Its subcellular location is the host cytosol. The enzyme catalyses 2 Fe(III)-heme b = beta-hematin. Heme detoxifying enzyme that converts heme to crystalline hemozoin (beta-hematin) to protect the organism from the toxic effects of heme. During its development, P.falciparum proteolyzes vast amounts of host hemoglobin, leading to heme release. In Plasmodium falciparum (isolate 3D7), this protein is Heme ligase.